Here is an 80-residue protein sequence, read N- to C-terminus: Large ribosomal subunit protein bL31B (80 aa).

This sequence belongs to the bacterial ribosomal protein bL31 family. Type B subfamily. As to quaternary structure, part of the 50S ribosomal subunit.

In Xanthomonas campestris pv. campestris (strain 8004), this protein is Large ribosomal subunit protein bL31B.